The sequence spans 508 residues: Tryptamine 4-monooxygenase (508 aa).

A signal peptide spans 1 to 19; that stretch reads MIAVLFSFVIAGCIYYIVS. C439 is a heme binding site.

Belongs to the cytochrome P450 family. It depends on heme as a cofactor.

It catalyses the reaction tryptamine + AH2 + O2 = 4-hydroxytryptamine + A + H2O. It participates in secondary metabolite biosynthesis. Its function is as follows. Cytochrome P450 monooxygenase; part of the gene cluster that mediates the biosynthesis of psilocybin, a psychotropic tryptamine-derived natural product. The first step in the pathway is the decarboxylation of L-tryptophan to tryptamine by the decarboxylase psiD. 4-hydroxy-L-tryptophan is accepted as substrate by psiD as well. The cytochrome P450 monooxygenase psiH then converts tryptamine to 4-hydroxytryptamine. The kinase psiK catalyzes the 4-O-phosphorylation step by converting 4-hydroxytryptamine into norbaeocystin. The methyltransferase psiM then catalyzes iterative methyl transfer to the amino group of norbaeocystin to yield psilocybin via a monomethylated intermediate, baeocystin. The chain is Tryptamine 4-monooxygenase from Psilocybe cubensis (Psychedelic mushroom).